Here is a 282-residue protein sequence, read N- to C-terminus: NADPH-dependent 7-cyano-7-deazaguanine reductase (282 aa).

88 to 90 (IES) provides a ligand contact to substrate. 90-91 (SK) contributes to the NADPH binding site. Cysteine 190 acts as the Thioimide intermediate in catalysis. The active-site Proton donor is the aspartate 197. 229 to 230 (HE) serves as a coordination point for substrate. An NADPH-binding site is contributed by 258–259 (RG).

This sequence belongs to the GTP cyclohydrolase I family. QueF type 2 subfamily. As to quaternary structure, homodimer.

It is found in the cytoplasm. It catalyses the reaction 7-aminomethyl-7-carbaguanine + 2 NADP(+) = 7-cyano-7-deazaguanine + 2 NADPH + 3 H(+). It functions in the pathway tRNA modification; tRNA-queuosine biosynthesis. Catalyzes the NADPH-dependent reduction of 7-cyano-7-deazaguanine (preQ0) to 7-aminomethyl-7-deazaguanine (preQ1). The polypeptide is NADPH-dependent 7-cyano-7-deazaguanine reductase (Shigella flexneri serotype 5b (strain 8401)).